The primary structure comprises 189 residues: Small ribosomal subunit protein uS5 (189 aa).

The S5 DRBM domain occupies 20 to 83 (FMDRLVHINR…ESAKRSLIRV (64 aa)).

The protein belongs to the universal ribosomal protein uS5 family. In terms of assembly, part of the 30S ribosomal subunit. Contacts proteins S4 and S8.

In terms of biological role, with S4 and S12 plays an important role in translational accuracy. Its function is as follows. Located at the back of the 30S subunit body where it stabilizes the conformation of the head with respect to the body. This chain is Small ribosomal subunit protein uS5, found in Methylocella silvestris (strain DSM 15510 / CIP 108128 / LMG 27833 / NCIMB 13906 / BL2).